The following is a 486-amino-acid chain: UDP-N-acetylmuramoyl-L-alanyl-D-glutamate--2,6-diaminopimelate ligase (486 aa).

Serine 26 serves as a coordination point for UDP-N-acetyl-alpha-D-muramoyl-L-alanyl-D-glutamate. 104-110 contacts ATP; sequence GTNGKTS. UDP-N-acetyl-alpha-D-muramoyl-L-alanyl-D-glutamate-binding positions include 152–153, serine 179, glutamine 185, and arginine 187; that span reads TT. Lysine 219 is modified (N6-carboxylysine). Meso-2,6-diaminopimelate is bound by residues arginine 383, 407–410, glycine 455, and glutamate 459; that span reads DNPR. The Meso-diaminopimelate recognition motif motif lies at 407 to 410; sequence DNPR.

The protein belongs to the MurCDEF family. MurE subfamily. Mg(2+) serves as cofactor. In terms of processing, carboxylation is probably crucial for Mg(2+) binding and, consequently, for the gamma-phosphate positioning of ATP.

The protein localises to the cytoplasm. It catalyses the reaction UDP-N-acetyl-alpha-D-muramoyl-L-alanyl-D-glutamate + meso-2,6-diaminopimelate + ATP = UDP-N-acetyl-alpha-D-muramoyl-L-alanyl-gamma-D-glutamyl-meso-2,6-diaminopimelate + ADP + phosphate + H(+). It functions in the pathway cell wall biogenesis; peptidoglycan biosynthesis. Its function is as follows. Catalyzes the addition of meso-diaminopimelic acid to the nucleotide precursor UDP-N-acetylmuramoyl-L-alanyl-D-glutamate (UMAG) in the biosynthesis of bacterial cell-wall peptidoglycan. This Caulobacter vibrioides (strain ATCC 19089 / CIP 103742 / CB 15) (Caulobacter crescentus) protein is UDP-N-acetylmuramoyl-L-alanyl-D-glutamate--2,6-diaminopimelate ligase.